Reading from the N-terminus, the 92-residue chain is Small ribosomal subunit protein uS19 (92 aa).

It belongs to the universal ribosomal protein uS19 family.

In terms of biological role, protein S19 forms a complex with S13 that binds strongly to the 16S ribosomal RNA. The protein is Small ribosomal subunit protein uS19 (rpsS) of Halalkalibacterium halodurans (strain ATCC BAA-125 / DSM 18197 / FERM 7344 / JCM 9153 / C-125) (Bacillus halodurans).